We begin with the raw amino-acid sequence, 395 residues long: tRNA (guanine-N(7)-)-methyltransferase (395 aa).

The S-adenosyl-L-methionine site is built by Glu126, Glu151, and Asp178. Substrate contacts are provided by Lys204 and Asp234.

It belongs to the class I-like SAM-binding methyltransferase superfamily. TrmB family.

It catalyses the reaction guanosine(46) in tRNA + S-adenosyl-L-methionine = N(7)-methylguanosine(46) in tRNA + S-adenosyl-L-homocysteine. Its pathway is tRNA modification; N(7)-methylguanine-tRNA biosynthesis. Catalyzes the formation of N(7)-methylguanine at position 46 (m7G46) in tRNA. This chain is tRNA (guanine-N(7)-)-methyltransferase, found in Campylobacter fetus subsp. fetus (strain 82-40).